A 212-amino-acid polypeptide reads, in one-letter code: Pyridoxine/pyridoxamine 5'-phosphate oxidase (212 aa).

Substrate contacts are provided by residues 8–11 and Lys-66; that span reads RTNY. FMN-binding positions include 61-66, 76-77, Lys-83, and Gln-105; these read RIVLLK and FT. Tyr-123, Arg-127, and Ser-131 together coordinate substrate. FMN contacts are provided by residues 140–141 and Trp-185; that span reads QS. 191–193 contacts substrate; sequence RLH. Arg-195 is an FMN binding site.

Belongs to the pyridoxamine 5'-phosphate oxidase family. In terms of assembly, homodimer. It depends on FMN as a cofactor.

It catalyses the reaction pyridoxamine 5'-phosphate + O2 + H2O = pyridoxal 5'-phosphate + H2O2 + NH4(+). The catalysed reaction is pyridoxine 5'-phosphate + O2 = pyridoxal 5'-phosphate + H2O2. It participates in cofactor metabolism; pyridoxal 5'-phosphate salvage; pyridoxal 5'-phosphate from pyridoxamine 5'-phosphate: step 1/1. Its pathway is cofactor metabolism; pyridoxal 5'-phosphate salvage; pyridoxal 5'-phosphate from pyridoxine 5'-phosphate: step 1/1. Its function is as follows. Catalyzes the oxidation of either pyridoxine 5'-phosphate (PNP) or pyridoxamine 5'-phosphate (PMP) into pyridoxal 5'-phosphate (PLP). The protein is Pyridoxine/pyridoxamine 5'-phosphate oxidase of Leptospira biflexa serovar Patoc (strain Patoc 1 / Ames).